We begin with the raw amino-acid sequence, 391 residues long: Formate-dependent phosphoribosylglycinamide formyltransferase (391 aa).

Residues 18–19 (EL) and Glu78 contribute to the N(1)-(5-phospho-beta-D-ribosyl)glycinamide site. ATP contacts are provided by residues Arg110, Lys151, 156–161 (SSGKGQ), 191–194 (EEFI), and Glu199. In terms of domain architecture, ATP-grasp spans 115–305 (DLASKDLKIK…EFELHLRAFL (191 aa)). Residues Glu264 and Glu276 each coordinate Mg(2+). Residues Asp283, Lys353, and 360 to 361 (RR) contribute to the N(1)-(5-phospho-beta-D-ribosyl)glycinamide site.

It belongs to the PurK/PurT family. As to quaternary structure, homodimer.

It carries out the reaction N(1)-(5-phospho-beta-D-ribosyl)glycinamide + formate + ATP = N(2)-formyl-N(1)-(5-phospho-beta-D-ribosyl)glycinamide + ADP + phosphate + H(+). It functions in the pathway purine metabolism; IMP biosynthesis via de novo pathway; N(2)-formyl-N(1)-(5-phospho-D-ribosyl)glycinamide from N(1)-(5-phospho-D-ribosyl)glycinamide (formate route): step 1/1. In terms of biological role, involved in the de novo purine biosynthesis. Catalyzes the transfer of formate to 5-phospho-ribosyl-glycinamide (GAR), producing 5-phospho-ribosyl-N-formylglycinamide (FGAR). Formate is provided by PurU via hydrolysis of 10-formyl-tetrahydrofolate. The sequence is that of Formate-dependent phosphoribosylglycinamide formyltransferase from Prochlorococcus marinus (strain AS9601).